Reading from the N-terminus, the 186-residue chain is Early nodulin-like protein 13 (186 aa).

The signal sequence occupies residues 1 to 23 (MAQRTLVATFFLIFFLLTNLVCS). The Phytocyanin domain occupies 24–128 (KEIIVGGKTS…GEKLHIVVMS (105 aa)). A disulfide bridge connects residues C82 and C116. N-linked (GlcNAc...) asparagine glycosylation is found at N83 and N90. A165 carries the GPI-anchor amidated alanine lipid modification. Positions 166–186 (SSLTRQVGVLGFVGLLAIVLL) are cleaved as a propeptide — removed in mature form.

Belongs to the early nodulin-like (ENODL) family. Mostly expressed in seedlings, siliques and flowers, and, to a lower extent, in roots, stems and seeds, but barely in leaves.

Its subcellular location is the cell membrane. May act as a carbohydrate transporter. Required, together with ENODL11, ENODL12, ENODL13, ENODL14 and ENODL15, for male-female communication and pollen tube reception and burst at the synergid cell surface of the female gametophyte. The protein is Early nodulin-like protein 13 of Arabidopsis thaliana (Mouse-ear cress).